The sequence spans 360 residues: Melanoma-associated antigen B16 (360 aa).

The tract at residues 1–118 is disordered; sequence MSQKNPEYAA…GNSVIPPDQP (118 aa). Basic and acidic residues predominate over residues 9 to 19; sequence AADHDHTREEM. Residues 63–98 are compositionally biased toward polar residues; the sequence is CSSSQLLTASNQEDPAYETPSTSRGLQHPYVSSSES. In terms of domain architecture, MAGE spans 125 to 324; sequence IDGKVNFLVN…TVFPSQYEEA (200 aa). The disordered stretch occupies residues 340–360; sequence AGPSSASGESSSDMGSNVPHI. The span at 341–360 shows a compositional bias: low complexity; it reads GPSSASGESSSDMGSNVPHI.

The chain is Melanoma-associated antigen B16 (Mageb16) from Rattus norvegicus (Rat).